Here is a 914-residue protein sequence, read N- to C-terminus: Dynamin-2A (914 aa).

Methionine 1 carries the N-acetylmethionine modification. The Dynamin-type G domain maps to 35 to 303; the sequence is PATFLNVVAL…IRSRMKLRLP (269 aa). A G1 motif region spans residues 45–52; sequence GNVGAGKS. 45-52 contacts GTP; sequence GNVGAGKS. Positions 71–73 are G2 motif; the sequence is ATR. The interval 143–146 is G3 motif; the sequence is DLPG. GTP is bound by residues 143–147 and 204–207; these read DLPGL and GKID. A G4 motif region spans residues 204 to 207; it reads GKID. A G5 motif region spans residues 238–241; that stretch reads AVIG. A compositionally biased stretch (basic and acidic residues) spans 507-522; the sequence is RREEELKGRSSKKGQD. Disordered regions lie at residues 507–570 and 629–648; these read RREE…TAGP and PEDEVEKSKSSKDKKANGPD. Polar residues predominate over residues 523-535; it reads AEQSLLSRATSPQ. Composition is skewed to basic and acidic residues over residues 547-560 and 634-645; these read SMKDKPSPQDKETP and EKSKSSKDKKAN. A PH domain is found at 572-696; sequence GEITAGYLMK…WINKLQKVIQ (125 aa). Residues 730 to 823 enclose the GED domain; sequence LRWMSQEVRG…QLSIHDNRAA (94 aa). The stretch at 781–805 forms a coiled coil; it reads NERIESLIQEDQNVKRRRERYQKQS. A disordered region spans residues 821–914; it reads RAAAASSYSD…PPPTGSAYRY (94 aa). 2 stretches are compositionally biased toward polar residues: residues 826–839 and 852–866; these read SSYSDNSGTESSPR and AFNSAANGPSDSLSK.

It belongs to the TRAFAC class dynamin-like GTPase superfamily. Dynamin/Fzo/YdjA family. Binds PtdIns3P. Interacts with SH3P3 (via SH3 domain) and (via C-terminus) with GAMMA-ADR. May homooligomerize or heterooligomerize.

Its subcellular location is the cytoplasm. The protein localises to the cytosol. The protein resides in the golgi apparatus membrane. It is found in the cytoskeleton. It localises to the phragmoplast. Its subcellular location is the cytoplasmic vesicle. The protein localises to the clathrin-coated vesicle. It catalyses the reaction GTP + H2O = GDP + phosphate + H(+). Its activity is regulated as follows. Increased GTPase activity in the presence of phosphatidic acid. In terms of biological role, microtubule-associated force-producing protein involved in clathrin-mediated vesicle trafficking from the trans-Golgi network to the central vacuole. Able to bind and hydrolyze GTP. Binds specifically to phosphatidylinositol 3-phosphate (PtdIns3P). In Arabidopsis thaliana (Mouse-ear cress), this protein is Dynamin-2A (DRP2A).